Reading from the N-terminus, the 272-residue chain is NH(3)-dependent NAD(+) synthetase (272 aa).

45–52 contributes to the ATP binding site; that stretch reads GISGGQDS. D51 is a Mg(2+) binding site. A deamido-NAD(+)-binding site is contributed by R138. T158 is a binding site for ATP. Mg(2+) is bound at residue E163. Residues K171 and D178 each contribute to the deamido-NAD(+) site. Positions 187 and 209 each coordinate ATP. A deamido-NAD(+)-binding site is contributed by 258–259; it reads HK.

The protein belongs to the NAD synthetase family. As to quaternary structure, homodimer.

The catalysed reaction is deamido-NAD(+) + NH4(+) + ATP = AMP + diphosphate + NAD(+) + H(+). The protein operates within cofactor biosynthesis; NAD(+) biosynthesis; NAD(+) from deamido-NAD(+) (ammonia route): step 1/1. Catalyzes the ATP-dependent amidation of deamido-NAD to form NAD. Uses ammonia as a nitrogen source. The chain is NH(3)-dependent NAD(+) synthetase from Bacillus velezensis (strain DSM 23117 / BGSC 10A6 / LMG 26770 / FZB42) (Bacillus amyloliquefaciens subsp. plantarum).